A 446-amino-acid polypeptide reads, in one-letter code: ATP-dependent protease ATPase subunit HslU (446 aa).

ATP contacts are provided by residues Val-17, Gly-59 to Glu-64, Asp-255, Glu-320, and Arg-392.

Belongs to the ClpX chaperone family. HslU subfamily. As to quaternary structure, a double ring-shaped homohexamer of HslV is capped on each side by a ring-shaped HslU homohexamer. The assembly of the HslU/HslV complex is dependent on binding of ATP.

The protein localises to the cytoplasm. Its function is as follows. ATPase subunit of a proteasome-like degradation complex; this subunit has chaperone activity. The binding of ATP and its subsequent hydrolysis by HslU are essential for unfolding of protein substrates subsequently hydrolyzed by HslV. HslU recognizes the N-terminal part of its protein substrates and unfolds these before they are guided to HslV for hydrolysis. This is ATP-dependent protease ATPase subunit HslU from Azotobacter vinelandii (strain DJ / ATCC BAA-1303).